We begin with the raw amino-acid sequence, 486 residues long: Glycogen synthase 2 (486 aa).

Residue lysine 15 coordinates ADP-alpha-D-glucose.

It belongs to the glycosyltransferase 1 family. Bacterial/plant glycogen synthase subfamily.

It carries out the reaction [(1-&gt;4)-alpha-D-glucosyl](n) + ADP-alpha-D-glucose = [(1-&gt;4)-alpha-D-glucosyl](n+1) + ADP + H(+). It functions in the pathway glycan biosynthesis; glycogen biosynthesis. Synthesizes alpha-1,4-glucan chains using ADP-glucose. This Rhizobium meliloti (strain 1021) (Ensifer meliloti) protein is Glycogen synthase 2 (glgA2).